We begin with the raw amino-acid sequence, 31 residues long: Cyclotide vibi-H (31 aa).

Positions Gly1 to Asn31 form a cross-link, cyclopeptide (Gly-Asn). 3 cysteine pairs are disulfide-bonded: Cys5-Cys21, Cys9-Cys23, and Cys14-Cys28.

This is a cyclic peptide.

Its function is as follows. Probably participates in a plant defense mechanism. Has cytotoxic activity, active against a human lymphoma cell line with an IC(50) of 1.6 uM. This chain is Cyclotide vibi-H, found in Viola biflora (Yellow wood violet).